A 101-amino-acid chain; its full sequence is Salivary thrombin inhibitor anophelin (101 aa).

The N-terminal stretch at 1–21 is a signal peptide; it reads MASKVIVIALLCIALAAFVQG. Positions 26–101 are disordered; it reads THGEEPEYDE…SDSSSGSTEN (76 aa). Residues 31–40 are compositionally biased toward acidic residues; sequence PEYDEDDGAD. A blocks active site cleft of host thrombin in a reverse direction compared to substrates region spans residues 75 to 78; it reads DPGR. The segment covering 75-87 has biased composition (basic and acidic residues); the sequence is DPGRRPEFLKQHN. Positions 88-101 are enriched in polar residues; sequence NENQSDSSSGSTEN. Asparagine 90 carries N-linked (GlcNAc...) asparagine glycosylation.

This sequence belongs to the anophelin family. In terms of assembly, interacts with human F2 (thrombin); the interaction results in thrombin inhibition.

It localises to the secreted. In terms of biological role, salivary protein with anticoagulant activity that inhibits host thrombin (F2). The protein is Salivary thrombin inhibitor anophelin of Anopheles stephensi (Indo-Pakistan malaria mosquito).